We begin with the raw amino-acid sequence, 336 residues long: Glyceraldehyde-3-phosphate dehydrogenase (336 aa).

NAD(+) contacts are provided by residues 12–13, Asp-35, Arg-79, and Ser-121; that span reads RI. Residues 152 to 154 and Thr-183 each bind D-glyceraldehyde 3-phosphate; that span reads SCT. Catalysis depends on Cys-153, which acts as the Nucleophile. Position 184 (Asn-184) interacts with NAD(+). Residues Arg-198, 211-212, and Arg-234 each bind D-glyceraldehyde 3-phosphate; that span reads TG. Residue Asn-317 coordinates NAD(+).

It belongs to the glyceraldehyde-3-phosphate dehydrogenase family. As to quaternary structure, homotetramer.

The protein resides in the cytoplasm. The catalysed reaction is D-glyceraldehyde 3-phosphate + phosphate + NAD(+) = (2R)-3-phospho-glyceroyl phosphate + NADH + H(+). It functions in the pathway carbohydrate degradation; glycolysis; pyruvate from D-glyceraldehyde 3-phosphate: step 1/5. Its activity is regulated as follows. Resistant to pentalenolactone. In terms of biological role, catalyzes the oxidative phosphorylation of glyceraldehyde 3-phosphate (G3P) to 1,3-bisphosphoglycerate (BPG) using the cofactor NAD. The first reaction step involves the formation of a hemiacetal intermediate between G3P and a cysteine residue, and this hemiacetal intermediate is then oxidized to a thioester, with concomitant reduction of NAD to NADH. The reduced NADH is then exchanged with the second NAD, and the thioester is attacked by a nucleophilic inorganic phosphate to produce BPG. In Streptomyces coelicolor (strain ATCC BAA-471 / A3(2) / M145), this protein is Glyceraldehyde-3-phosphate dehydrogenase (gap).